We begin with the raw amino-acid sequence, 143 residues long: MKSSIIRFSVSLPQNLLETLDERLTHKGYSSRSEIVRDMIREKLNEEIWSSGAENTQGVAVLTIIYDHHQRELNQRMIDIQHTSTHKGNVEILCNTHVHLDQHNCLETIILRGNGVHIEDLSIEIGGLKGVKFSKLTRASRFE.

Ni(2+)-binding residues include His-82, His-97, His-99, and Cys-105.

Belongs to the transcriptional regulatory CopG/NikR family. Ni(2+) is required as a cofactor.

Transcriptional regulator. The protein is Putative nickel-responsive regulator of Helicobacter hepaticus (strain ATCC 51449 / 3B1).